Here is a 420-residue protein sequence, read N- to C-terminus: Calreticulin (420 aa).

The N-terminal stretch at 1 to 25 (MAIRKGSSYAVAALLALASVAAVAG) is a signal peptide. Residue N57 is glycosylated (N-linked (GlcNAc...) asparagine). Residues Y115, K117, Y134, and D141 each contribute to the an alpha-D-glucoside site. 7 consecutive repeat copies span residues 197 to 208 (KHTGSIYEHWDI), 216 to 227 (DPEAKKPEDWDD), 233 to 244 (DPEDKKPEGYDD), 251 to 262 (DPDAKKPEDWDD), 266 to 276 (GEWTAPTIPNP), 280 to 290 (GPWKQKKIKNP), and 294 to 304 (GKWKAPMIDNP). The segment at 197 to 262 (KHTGSIYEHW…DAKKPEDWDD (66 aa)) is 4 X approximate repeats. A compositionally biased stretch (basic and acidic residues) spans 213–258 (KIKDPEAKKPEDWDDKEYIPDPEDKKPEGYDDIPKEIPDPDAKKPE). The segment at 213–285 (KIKDPEAKKP…PEYKGPWKQK (73 aa)) is disordered. The segment at 266 to 304 (GEWTAPTIPNPEYKGPWKQKKIKNPNYQGKWKAPMIDNP) is 3 X approximate repeats. E324 lines the an alpha-D-glucoside pocket. Basic and acidic residues predominate over residues 355-381 (GKHKEAEKAAFDEAEKKKEEEDAAKGG). The disordered stretch occupies residues 355 to 420 (GKHKEAEKAA…DSDDEKHDEL (66 aa)). Positions 382–402 (DDEDDDLEDEEDDEKADEDKA) are enriched in acidic residues. The span at 403–420 (DSDAEDGKDSDDEKHDEL) shows a compositional bias: basic and acidic residues. Residues 417–420 (HDEL) carry the Prevents secretion from ER motif.

Belongs to the calreticulin family.

The protein resides in the endoplasmic reticulum lumen. Functionally, molecular calcium-binding chaperone promoting folding, oligomeric assembly and quality control in the ER via the calreticulin/calnexin cycle. This lectin may interact transiently with almost all of the monoglucosylated glycoproteins that are synthesized in the ER. The protein is Calreticulin (CRT) of Zea mays (Maize).